A 301-amino-acid polypeptide reads, in one-letter code: Homoserine O-acetyltransferase (301 aa).

Cysteine 142 serves as the catalytic Acyl-thioester intermediate. Substrate-binding residues include lysine 163 and serine 192. Histidine 235 (proton acceptor) is an active-site residue. Residue glutamate 237 is part of the active site. Arginine 249 contributes to the substrate binding site.

Belongs to the MetA family.

The protein localises to the cytoplasm. It catalyses the reaction L-homoserine + acetyl-CoA = O-acetyl-L-homoserine + CoA. It participates in amino-acid biosynthesis; L-methionine biosynthesis via de novo pathway; O-acetyl-L-homoserine from L-homoserine: step 1/1. In terms of biological role, transfers an acetyl group from acetyl-CoA to L-homoserine, forming acetyl-L-homoserine. The chain is Homoserine O-acetyltransferase from Bacillus subtilis (strain 168).